The chain runs to 123 residues: UPF0738 protein BcerKBAB4_1107 (123 aa).

Belongs to the UPF0738 family.

The chain is UPF0738 protein BcerKBAB4_1107 from Bacillus mycoides (strain KBAB4) (Bacillus weihenstephanensis).